Here is a 1534-residue protein sequence, read N- to C-terminus: Ribosome-binding protein 1 (1534 aa).

Topologically, residues 1–7 (MDIYDTQ) are lumenal. A helical membrane pass occupies residues 8-28 (TLGVMVFGGFMVVSAIGIFLV). Residues 29 to 1534 (STFSMKETSY…DSSSKEGTSV (1506 aa)) lie on the Cytoplasmic side of the membrane. 2 disordered regions span residues 45–91 (QRKE…PAPN) and 125–152 (PAMPQEKLAPSPKDKKKKEKKVAKVEPA). Over residues 52–63 (THHQKVEKKKKE) the composition is skewed to basic residues. Positions 64–88 (KTVEKKGKTKKKEEKPNGKIPDHEP) are enriched in basic and acidic residues. The segment covering 125-135 (PAMPQEKLAPS) has biased composition (low complexity). K148 is covalently cross-linked (Glycyl lysine isopeptide (Lys-Gly) (interchain with G-Cter in SUMO2)). Phosphoserine is present on residues S159 and S165. Disordered regions lie at residues 173–780 (APKE…PLYL), 968–987 (KELVEKSEAARQEEQQRKAL), and 1021–1082 (RELC…RAEN). Residues 175–194 (KEVPMVVVPPVGAKAGTPAT) show a composition bias toward low complexity. 54 tandem repeats follow at residues 197 to 206 (AQGKKAEGAQ), 207 to 216 (NQSRKAEGAP), 217 to 226 (NQGKKAEGAL), 227 to 236 (NQGKKAEGAQ), 237 to 246 (NQGKKVEVAP), 247 to 256 (NQGKKAEGGQ), 257 to 266 (NQGKKVEGAQ), 267 to 276 (NQGKKAEGTP), 277 to 286 (NQGKKAEGAP), 287 to 296 (NQGKKTDGAP), 297 to 306 (NQGKKSEGAP), 307 to 316 (NQGKKAEGAQ), 317 to 326 (NQGKKVEVAP), 327 to 336 (NQGKKAEGGQ), 337 to 346 (NQGKKVEGAQ), 347 to 356 (NQGKKAEGTP), 357 to 366 (NQGKKAEGAP), 367 to 376 (NQGKKTDGAP), 377 to 386 (NQGKKSEGAP), 387 to 396 (NQGKKVEGAQ), 397 to 406 (NQGKKVEGVQ), 407 to 416 (NQGKKAEGAQ), 417 to 426 (NQGKKAEGTS), 427 to 436 (SQGRKEEGTP), 437 to 446 (NLGKKAEGSP), 447 to 456 (NQGKKVEVVQ), 457 to 466 (NQSKKVEGAP), 467 to 476 (NQGKKAEGSQ), 477 to 486 (NQGKKTEGAS), 487 to 496 (NQGKKVDGAQ), 497 to 506 (NQGKKAEGAP), 507 to 516 (NQGKKVEGAQ), 517 to 526 (NQGKKAEGTP), 527 to 536 (NQGKKAEGAQ), 537 to 546 (NQGKKAEGAP), 547 to 556 (NQGKKAEGAP), 557 to 566 (NQGKKAEGAP), 567 to 576 (NQGKKAEGAP), 577 to 586 (NQGKKAEAAP), 587 to 596 (NQGKKAEGAP), 597 to 606 (NQGKKAEGAP), 607 to 616 (NQGKKAEAAP), 617 to 626 (NQGKKAEGAP), 627 to 636 (NQGKKAEGAP), 637 to 646 (NQGKKAEGAP), 647 to 656 (NQGKKAEGAQ), 657 to 666 (NQGKKAEGAP), 667 to 676 (NQGKKADLVA), 677 to 686 (NQGTKAEGVA), 687 to 696 (GQGKKAEGAP), 697 to 706 (NQGKKGEGTP), 707 to 716 (NQGKKSEGSP), 717 to 726 (NQGKKVDASA), and 727 to 736 (NQSKRAESAP). Residues 197–736 (AQGKKAEGAQ…NQSKRAESAP (540 aa)) form a 54 X 10 AA tandem repeats of [NASG]-[QL]-[GS]-[KRT]-[KR]-[AVTSEG]-[ED]-[AGVLS]-[ATGSV]-[PQLSA] region. T275 carries the phosphothreonine modification. Over residues 395–428 (AQNQGKKVEGVQNQGKKAEGAQNQGKKAEGTSSQ) the composition is skewed to polar residues. The span at 474-499 (GSQNQGKKTEGASNQGKKVDGAQNQG) shows a compositional bias: polar residues. Residues 705-718 (TPNQGKKSEGSPNQ) show a composition bias toward polar residues. Phosphoserine is present on S715. Residue S747 is modified to Phosphoserine. K752 participates in a covalent cross-link: Glycyl lysine isopeptide (Lys-Gly) (interchain with G-Cter in SUMO1). S1032 carries the post-translational modification Phosphoserine. The span at 1059 to 1080 (AEVKSKSEELSGLHGQLKEARA) shows a compositional bias: basic and acidic residues. K1064 carries the N6-acetyllysine modification. A phosphoserine mark is found at S1091 and S1110. 3 disordered regions span residues 1224–1251 (ELLKQRPADTDPSSDLASKLREAEETQN), 1391–1416 (KSHVEDGDVAGSPAAPPAEQDPVELK), and 1509–1534 (ERDTVKKLQEQLDKTDDSSSKEGTSV). Positions 1509–1528 (ERDTVKKLQEQLDKTDDSSS) are enriched in basic and acidic residues.

It localises to the endoplasmic reticulum membrane. In terms of biological role, acts as a ribosome receptor and mediates interaction between the ribosome and the endoplasmic reticulum membrane. The protein is Ribosome-binding protein 1 (RRBP1) of Canis lupus familiaris (Dog).